The primary structure comprises 370 residues: Peptidyl-prolyl cis-trans isomerase D (370 aa).

Position 5 is a phosphoserine (Ser-5). The PPIase cyclophilin-type domain maps to 19-183 (FFDVDIGGER…KLCVIAECGE (165 aa)). Position 171 is an N6-acetyllysine (Lys-171). The segment at 185 to 215 (KEGDDWGIFPKDGSGDSHPDFPEDADVDLKD) is chaperone activity. Phosphoserine is present on Ser-198. Residues 214–370 (KDVDKILLIS…EKAAYAKMFA (157 aa)) form an interaction with HSP90AB1 region. TPR repeat units follow at residues 223–256 (SEDL…VEGS), 273–306 (LSCV…DPSN), and 307–340 (TKAL…APED).

The protein belongs to the cyclophilin-type PPIase family. PPIase D subfamily. In terms of assembly, identified in ESR1 or NR3C1/GCR steroid receptor-chaperone complexes. Found in HSP90 chaperone complexes with kinase clients LCK or EIF2AK1. Two monomers associate with one HSP90 homodimer. Interacts with HSP90AA1. Interacts with HSP90AB1; PPID and FKBP4 compete for binding to HSP90AB1 and the interaction is mutually exclusive with the PPID:HSPA8 interaction. Interacts with HSPA8; PPID and STIP1 but not FKBP4 compete for binding to HSPA8 and the interaction is mutually exclusive with the PPID:HSP90AB1 interaction. Interacts with S100A1 and S100A2; the interactions dissociate the PPID:HSP90AA1 interaction. Interacts with S100A6. Interacts with MYB, ILF2, XRCC6, RACK1 and RPS3. Interacts with cytoplasmic dynein 1 intermediate chain (DYNC1I1 or DYNC1I2). The N-terminus is blocked. In terms of tissue distribution, detected in heart, thymis and brain.

It is found in the cytoplasm. It localises to the nucleus. The protein resides in the nucleolus. Its subcellular location is the nucleoplasm. The catalysed reaction is [protein]-peptidylproline (omega=180) = [protein]-peptidylproline (omega=0). Its activity is regulated as follows. Less sensitive to inhibition by cyclosporin A than is CYP-18. Its function is as follows. PPIase that catalyzes the cis-trans isomerization of proline imidic peptide bonds in oligopeptides and may therefore assist protein folding. Proposed to act as a co-chaperone in HSP90 complexes such as in unligated steroid receptors heterocomplexes. Different co-chaperones seem to compete for association with HSP90 thus establishing distinct HSP90-co-chaperone-receptor complexes with the potential to exert tissue-specific receptor activity control. May have a preference for estrogen receptor complexes and is not found in glucocorticoid receptor complexes. May be involved in cytoplasmic dynein-dependent movement of the receptor from the cytoplasm to the nucleus. May regulate MYB by inhibiting its DNA-binding activity. Involved in regulation of AHR signaling by promoting the formation of the AHR:ARNT dimer; the function is independent of HSP90 but requires the chaperone activity. Involved in regulation of UV radiation-induced apoptosis. This chain is Peptidyl-prolyl cis-trans isomerase D, found in Bos taurus (Bovine).